Here is a 471-residue protein sequence, read N- to C-terminus: Paraneoplastic antigen-like protein 8A (471 aa).

Disordered stretches follow at residues 188 to 300 (SAAG…EGSA) and 321 to 471 (ASRG…PSAV). The segment covering 238 to 247 (HSRRKRQKKT) has biased composition (basic residues). A compositionally biased stretch (low complexity) spans 256–269 (KKSQGSHSHSSASL). A compositionally biased stretch (basic and acidic residues) spans 270 to 287 (KHPEADDGKNRERLEHVR).

This sequence belongs to the PNMA family.

The polypeptide is Paraneoplastic antigen-like protein 8A (PNMA8A) (Bos taurus (Bovine)).